Consider the following 110-residue polypeptide: Large ribosomal subunit protein uL22 (110 aa).

This sequence belongs to the universal ribosomal protein uL22 family. Part of the 50S ribosomal subunit.

This protein binds specifically to 23S rRNA; its binding is stimulated by other ribosomal proteins, e.g. L4, L17, and L20. It is important during the early stages of 50S assembly. It makes multiple contacts with different domains of the 23S rRNA in the assembled 50S subunit and ribosome. Its function is as follows. The globular domain of the protein is located near the polypeptide exit tunnel on the outside of the subunit, while an extended beta-hairpin is found that lines the wall of the exit tunnel in the center of the 70S ribosome. In Acinetobacter baumannii (strain ACICU), this protein is Large ribosomal subunit protein uL22.